The sequence spans 211 residues: Dual specificity phosphatase 29 (211 aa).

The Tyrosine-protein phosphatase domain maps to 47–192; sequence HVNEVWPGIY…LRTLDIQLAI (146 aa). Residue 136–143 participates in substrate binding; sequence HCAMGRSR. C137 functions as the Phosphocysteine intermediate in the catalytic mechanism.

It belongs to the protein-tyrosine phosphatase family. Non-receptor class dual specificity subfamily.

It localises to the cytoplasm. The protein localises to the nucleus. It catalyses the reaction O-phospho-L-tyrosyl-[protein] + H2O = L-tyrosyl-[protein] + phosphate. The enzyme catalyses O-phospho-L-seryl-[protein] + H2O = L-seryl-[protein] + phosphate. The catalysed reaction is O-phospho-L-threonyl-[protein] + H2O = L-threonyl-[protein] + phosphate. In terms of biological role, dual specificity phosphatase able to dephosphorylate phosphotyrosine, phosphoserine and phosphothreonine residues within the same substrate, with a preference for phosphotyrosine as a substrate. Involved in the modulation of AMPK and MAPK1/2 signaling pathways. In Callorhinchus milii (Ghost shark), this protein is Dual specificity phosphatase 29 (dusp29).